We begin with the raw amino-acid sequence, 286 residues long: ATP synthase gamma chain (286 aa).

The protein belongs to the ATPase gamma chain family. In terms of assembly, F-type ATPases have 2 components, CF(1) - the catalytic core - and CF(0) - the membrane proton channel. CF(1) has five subunits: alpha(3), beta(3), gamma(1), delta(1), epsilon(1). CF(0) has three main subunits: a, b and c.

The protein localises to the cell membrane. In terms of biological role, produces ATP from ADP in the presence of a proton gradient across the membrane. The gamma chain is believed to be important in regulating ATPase activity and the flow of protons through the CF(0) complex. The polypeptide is ATP synthase gamma chain (Bacillus mycoides (strain KBAB4) (Bacillus weihenstephanensis)).